The primary structure comprises 474 residues: Coronin-1C (474 aa).

WD repeat units follow at residues 78–118 (GHTG…LTLS), 128–168 (GHSK…ALIN), 172–202 (MHSD…RVID), 215–249 (AHEG…ALWN), and 263–303 (DTSN…PYVH). Residues 435–474 (VQNEAKLDEILKEIKSIKETICSQDERISKLEQQLAKMAA) are a coiled coil. At Lys446 the chain carries N6-acetyllysine.

It belongs to the WD repeat coronin family. In terms of assembly, homotrimer. Binds F-actin. Interacts with RCC2. Interacts preferentially with nucleotide-free and GDP-bound RAC1. Interacts with VIM (via head domain). Interacts with MICAL2; this interaction recruits MICAL2 to the actin filaments. Detected in skeletal muscle (at protein level). Detected in fibroblasts (at protein level). Ubiquitous.

The protein resides in the cell membrane. Its subcellular location is the cell projection. It localises to the lamellipodium. It is found in the ruffle membrane. The protein localises to the cytoplasm. The protein resides in the cytoskeleton. Its subcellular location is the cell cortex. It localises to the endosome membrane. Functionally, plays a role in directed cell migration by regulating the activation and subcellular location of RAC1. Increases the presence of activated RAC1 at the leading edge of migrating cells. Required for normal organization of the cytoskeleton, including the actin cytoskeleton, microtubules and the vimentin intermediate filaments. Required for normal cell proliferation, cell migration, and normal formation of lamellipodia. Plays a role in endoplasmic reticulum-associated endosome fission: localizes to endosome membrane tubules and promotes recruitment of TMCC1, leading to recruitment of the endoplasmic reticulum to endosome tubules for fission. Endosome membrane fission of early and late endosomes is essential to separate regions destined for lysosomal degradation from carriers to be recycled to the plasma membrane. Required for normal distribution of mitochondria within cells. In Mus musculus (Mouse), this protein is Coronin-1C (Coro1c).